The following is a 227-amino-acid chain: Izumo sperm-egg fusion protein 4 (227 aa).

A signal peptide spans 1–24 (MFGQGRLGQAMALLLFLGMTAALA). Asparagine 153 and asparagine 214 each carry an N-linked (GlcNAc...) asparagine glycan.

This sequence belongs to the Izumo family.

Its subcellular location is the secreted. The chain is Izumo sperm-egg fusion protein 4 (Izumo4) from Mus musculus (Mouse).